A 73-amino-acid polypeptide reads, in one-letter code: MKADIHPDYHTIKVVMTDGTEYETRSTWGTEGATMNLEIDPKSHPAWTGGNQQLVDRGGRVSKFKKRFEGLGL.

It belongs to the bacterial ribosomal protein bL31 family. Type A subfamily. Part of the 50S ribosomal subunit.

In terms of biological role, binds the 23S rRNA. The polypeptide is Large ribosomal subunit protein bL31 (Rhizobium meliloti (strain 1021) (Ensifer meliloti)).